The chain runs to 304 residues: Glyceraldehyde-3-phosphate dehydrogenase 2 (304 aa).

Residues 1–2 (RI), aspartate 22, and arginine 67 contribute to the NAD(+) site. Residues 138 to 140 (SCT), threonine 169, 198 to 199 (TG), and arginine 221 each bind D-glyceraldehyde 3-phosphate. The active-site Nucleophile is cysteine 139. Asparagine 303 lines the NAD(+) pocket.

The protein belongs to the glyceraldehyde-3-phosphate dehydrogenase family. In terms of assembly, homotetramer.

The protein localises to the cytoplasm. The catalysed reaction is D-glyceraldehyde 3-phosphate + phosphate + NAD(+) = (2R)-3-phospho-glyceroyl phosphate + NADH + H(+). It functions in the pathway carbohydrate degradation; glycolysis; pyruvate from D-glyceraldehyde 3-phosphate: step 1/5. The protein is Glyceraldehyde-3-phosphate dehydrogenase 2 (Gapdh2) of Drosophila subobscura (Fruit fly).